A 146-amino-acid chain; its full sequence is Aminoglycoside N(6')-acetyltransferase type 1 (146 aa).

The 146-residue stretch at 1 to 146 (MNIMPISESQ…RVVYFKKNIG (146 aa)) folds into the N-acetyltransferase domain. Tryptophan 22, histidine 25, tyrosine 66, and glutamate 79 together coordinate substrate. 81-83 (IFV) serves as a coordination point for acetyl-CoA. A substrate-binding site is contributed by aspartate 115. Asparagine 120 contributes to the acetyl-CoA binding site. Glutamate 136 contacts substrate.

As to quaternary structure, homodimer.

The enzyme catalyses kanamycin B + acetyl-CoA = N(6')-acetylkanamycin B + CoA + H(+). In terms of biological role, catalyzes the transfer of an acetyl group from acetyl-CoA to the 6'-amino group of aminoglycoside molecules conferring resistance to antibiotics containing the purpurosamine ring including amikacin, kanamycin, tobramycin and netilmicin. In Acinetobacter baumannii, this protein is Aminoglycoside N(6')-acetyltransferase type 1.